We begin with the raw amino-acid sequence, 616 residues long: Chaperone protein HscA (616 aa).

Belongs to the heat shock protein 70 family.

Functionally, chaperone involved in the maturation of iron-sulfur cluster-containing proteins. Has a low intrinsic ATPase activity which is markedly stimulated by HscB. Involved in the maturation of IscU. In Escherichia coli O6:H1 (strain CFT073 / ATCC 700928 / UPEC), this protein is Chaperone protein HscA.